The primary structure comprises 381 residues: MSASRKTLVVTNDFPPRIGGIQSYLRDFIATQDPESIVVFASTQNAEEAHAYDKTLDYEVIRWPRSVMLPTPTTAHAMAEIIREREIDNVWFGAAAPLALMAGTAKQAGASKVIASTHGHEVGWSMLPGSRQSLRKIGTEVDVLTYISQYTLRRFKSAFGSHPTFEHLPSGVDVKRFTPATPEDKSATRKKLGFTDTTPVIACNSRLVPRKGQDSLIKAMPQVIAARPDAQLLIVGSGRYESTLRRLATDVSQNVKFLGRLEYQDMINTLAAADIFAMPARTRGGGLDVEGLGIVYLEAQACGVPVIAGTSGGAPETVTPATGLVVEGSDVDKLSELLIELLDDPIRRAAMGAAGRAHVEAEWSWEIMGERLTNILQSEPR.

GDP-alpha-D-mannose-binding residues include Arg206, Lys211, Leu261, and Glu298.

The protein belongs to the glycosyltransferase group 1 family. Glycosyltransferase 4 subfamily.

It catalyses the reaction a 1,2-diacyl-sn-glycero-3-phospho-[alpha-D-mannopyranosyl-(1&lt;-&gt;6)-D-myo-inositol] + GDP-alpha-D-mannose = a 2,6-O-bis(alpha-D-mannopyranosyl)-1-phosphatidyl-1D-myo-inositol + GDP + H(+). The catalysed reaction is a 1,2-diacyl-sn-glycero-3-phospho-[alpha-D-6-acyl-mannopyranosyl-(1&lt;-&gt;6)-D-myo-inositol] + GDP-alpha-D-mannose = a 2-O-(alpha-D-mannosyl)-6-O-(6-O-acyl-alpha-D-mannosyl)-1-phosphatidyl-1D-myo-inositol + GDP + H(+). Its pathway is phospholipid metabolism; phosphatidylinositol metabolism. Its function is as follows. Involved in the biosynthesis of phosphatidyl-myo-inositol mannosides (PIM) which are early precursors in the biosynthesis of lipomannans (LM) and lipoarabinomannans (LAM). Catalyzes the addition of a mannosyl residue from GDP-D-mannose (GDP-Man) to the position 6 of a phosphatidyl-myo-inositol bearing an alpha-1,2-linked mannose residue (PIM1) to generate phosphatidyl-myo-inositol bearing alpha-1,2- and alpha-1,6-linked mannose residues (Ac1PIM2). PimB also catalyzes the addition of a mannosyl residue from GDP-Man to the position 6 of phosphatidyl-myo-inositol bearing an acylated alpha-1,2-linked mannose residue (Ac1PIM1) to generate monoacylated phosphatidyl-myo-inositol bearing alpha-1,2- and alpha-1,6-linked mannose residues (Ac1PIM2). The addition of the second mannosyl residue by PimB preferentially occurs before the acylation of the mannosyl residue transferred by PimA. Also able to transfer a mannosyl residue from GDP-Man to the position 6 of a phosphatidyl-myo-inositol (PI), but this reaction is very slow. The chain is GDP-mannose-dependent monoacylated alpha-(1-6)-phosphatidylinositol monomannoside mannosyltransferase from Corynebacterium glutamicum (strain ATCC 13032 / DSM 20300 / JCM 1318 / BCRC 11384 / CCUG 27702 / LMG 3730 / NBRC 12168 / NCIMB 10025 / NRRL B-2784 / 534).